The primary structure comprises 367 residues: UDP-N-acetylglucosamine--N-acetylmuramyl-(pentapeptide) pyrophosphoryl-undecaprenol N-acetylglucosamine transferase (367 aa).

UDP-N-acetyl-alpha-D-glucosamine is bound by residues 15–17 (TGG), asparagine 126, arginine 169, serine 197, and glutamine 298.

It belongs to the glycosyltransferase 28 family. MurG subfamily.

It localises to the cell inner membrane. It catalyses the reaction di-trans,octa-cis-undecaprenyl diphospho-N-acetyl-alpha-D-muramoyl-L-alanyl-D-glutamyl-meso-2,6-diaminopimeloyl-D-alanyl-D-alanine + UDP-N-acetyl-alpha-D-glucosamine = di-trans,octa-cis-undecaprenyl diphospho-[N-acetyl-alpha-D-glucosaminyl-(1-&gt;4)]-N-acetyl-alpha-D-muramoyl-L-alanyl-D-glutamyl-meso-2,6-diaminopimeloyl-D-alanyl-D-alanine + UDP + H(+). The protein operates within cell wall biogenesis; peptidoglycan biosynthesis. Functionally, cell wall formation. Catalyzes the transfer of a GlcNAc subunit on undecaprenyl-pyrophosphoryl-MurNAc-pentapeptide (lipid intermediate I) to form undecaprenyl-pyrophosphoryl-MurNAc-(pentapeptide)GlcNAc (lipid intermediate II). The polypeptide is UDP-N-acetylglucosamine--N-acetylmuramyl-(pentapeptide) pyrophosphoryl-undecaprenol N-acetylglucosamine transferase (Bradyrhizobium sp. (strain BTAi1 / ATCC BAA-1182)).